The primary structure comprises 293 residues: Aspartate carbamoyltransferase catalytic subunit (293 aa).

Carbamoyl phosphate is bound by residues Arg50 and Thr51. Lys78 provides a ligand contact to L-aspartate. Carbamoyl phosphate contacts are provided by Arg100, His127, and Gln130. L-aspartate is bound by residues Arg160 and Arg210. Ala253 and Pro254 together coordinate carbamoyl phosphate.

The protein belongs to the aspartate/ornithine carbamoyltransferase superfamily. ATCase family. Heterododecamer (2C3:3R2) of six catalytic PyrB chains organized as two trimers (C3), and six regulatory PyrI chains organized as three dimers (R2).

It catalyses the reaction carbamoyl phosphate + L-aspartate = N-carbamoyl-L-aspartate + phosphate + H(+). It participates in pyrimidine metabolism; UMP biosynthesis via de novo pathway; (S)-dihydroorotate from bicarbonate: step 2/3. In terms of biological role, catalyzes the condensation of carbamoyl phosphate and aspartate to form carbamoyl aspartate and inorganic phosphate, the committed step in the de novo pyrimidine nucleotide biosynthesis pathway. This chain is Aspartate carbamoyltransferase catalytic subunit, found in Staphylococcus aureus (strain USA300).